The chain runs to 80 residues: Acyl carrier protein (80 aa).

The region spanning 2–77 is the Carrier domain; sequence SDTLKRLQKI…DALNYIENKI (76 aa). Position 37 is an O-(pantetheine 4'-phosphoryl)serine (Ser37).

Belongs to the acyl carrier protein (ACP) family. In terms of processing, 4'-phosphopantetheine is transferred from CoA to a specific serine of apo-ACP by AcpS. This modification is essential for activity because fatty acids are bound in thioester linkage to the sulfhydryl of the prosthetic group.

Its subcellular location is the plastid. The protein resides in the chloroplast. It participates in lipid metabolism; fatty acid biosynthesis. Carrier of the growing fatty acid chain in fatty acid biosynthesis. This chain is Acyl carrier protein, found in Cylindrotheca sp. (strain N1) (Marine diatom).